We begin with the raw amino-acid sequence, 1758 residues long: MKVSDRRKFEKANFDEFESALNNKNDLVHCPSITLFESIPTEVRSFYEDEKSGLIKVVKFRTGAMDRKRSFEKVVISVMVGKNVKKFLTFVEDEPDFQGGPIPSKYLIPKKINLMVYTLFQVHTLKFNRKDYDTLSLFYLNRGYYNELSFRVLERCHEIASARPNDSSTMRTFTDFVSGAPIVRSLQKSTIRKYGYNLAPYMFLLLHVDELSIFSAYQASLPGEKKVDTERLKRDLCPRKPIEIKYFSQICNDMMNKKDRLGDILHIILRACALNFGAGPRGGAGDEEDRSITNEEPIIPSVDEHGLKVCKLRSPNTPRRLRKTLDAVKALLVSSCACTARDLDIFDDNNGVAMWKWIKILYHEVAQETTLKDSYRITLVPSSDGISLLAFAGPQRNVYVDDTTRRIQLYTDYNKNGSSEPRLKTLDGLTSDYVFYFVTVLRQMQICALGNSYDAFNHDPWMDVVGFEDPNQVTNRDISRIVLYSYMFLNTAKGCLVEYATFRQYMRELPKNAPQKLNFREMRQGLIALGRHCVGSRFETDLYESATSELMANHSVQTGRNIYGVDSFSLTSVSGTTATLLQERASERWIQWLGLESDYHCSFSSTRNAEDVVAGEAASSNHHQKISRVTRKRPREPKSTNDILVAGQKLFGSSFEFRDLHQLRLCYEIYMADTPSVAVQAPPGYGKTELFHLPLIALASKGDVEYVSFLFVPYTVLLANCMIRLGRCGCLNVAPVRNFIEEGYDGVTDLYVGIYDDLASTNFTDRIAAWENIVECTFRTNNVKLGYLIVDEFHNFETEVYRQSQFGGITNLDFDAFEKAIFLSGTAPEAVADAALQRIGLTGLAKKSMDINELKRSEDLSRGLSSYPTRMFNLIKEKSEVPLGHVHKIRKKVESQPEEALKLLLALFESEPESKAIVVASTTNEVEELACSWRKYFRVVWIHGKLGAAEKVSRTKEFVTDGSMQVLIGTKLVTEGIDIKQLMMVIMLDNRLNIIELIQGVGRLRDGGLCYLLSRKNSWAARNRKGELPPIKEGCITEQVREFYGLESKKGKKGQHVGCCGSRTDLSADTVELIERMDRLAEKQATASMSIVALPSSFQESNSSDRYRKYCSSDEDSNTCIHGSANASTNASTNAITTASTNVRTNATTNASTNATTNASTNASTNATTNASTNATTNSSTNATTTASTNVRTSATTTASINVRTSATTTESTNSSTNATTTESTNSSTNATTTESTNSNTSATTTASINVRTSATTTESTNSSTSATTTASINVRTSATTTKSINSSTNATTTESTNSNTNATTTESTNSSTNATTTESTNSSTNATTTESTNSNTSAATTESTNSNTSATTTESTNASAKEDANKDGNAEDNRFHPVTDINKESYKRKGSQMVLLERKKLKAQFPNTSENMNVLQFLGFRSDEIKHLFLYGIDIYFCPEGVFTQYGLCKGCQKMFELCVCWAGQKVSYRRIAWEALAVERMLRNDEEYKEYLEDIEPYHGDPVGYLKYFSVKRREIYSQIQRNYAWYLAITRRRETISVLDSTRGKQGSQVFRMSGRQIKELYFKVWSNLRESKTEVLQYFLNWDEKKCQEEWEAKDDTVVVEALEKGGVFQRLRSMTSAGLQGPQYVKLQFSRHHRQLRSRYELSLGMHLRDQIALGVTPSKVPHWTAFLSMLIGLFYNKTFRQKLEYLLEQISEVWLLPHWLDLANVEVLAADDTRVPLYMLMVAVHKELDSDDVPDGRFDILLCRDSSREVGE.

A Helicase ATP-binding domain is found at 668 to 845 (EIYMADTPSV…LQRIGLTGLA (178 aa)). An ATP-binding site is contributed by 681-688 (APPGYGKT). One can recognise a Helicase C-terminal domain in the interval 900–1051 (ALKLLLALFE…EFYGLESKKG (152 aa)). Residues 1142-1360 (NVRTNATTNA…ATTTESTNAS (219 aa)) are compositionally biased toward low complexity. Positions 1142 to 1384 (NVRTNATTNA…RFHPVTDINK (243 aa)) are disordered. Positions 1361-1384 (AKEDANKDGNAEDNRFHPVTDINK) are enriched in basic and acidic residues.

The protein belongs to the helicase family. Yeast subtelomeric Y' repeat subfamily.

Catalyzes DNA unwinding and is involved in telomerase-independent telomere maintenance. This chain is Y' element ATP-dependent helicase YIL177C, found in Saccharomyces cerevisiae (strain ATCC 204508 / S288c) (Baker's yeast).